The sequence spans 458 residues: Flavonol 3-O-glucosyltransferase F3GT2 (458 aa).

The active-site Proton acceptor is the histidine 20. Histidine 20 contacts an anthocyanidin. Aspartate 119 serves as the catalytic Charge relay. Threonine 141 is a UDP-alpha-D-glucose binding site. An an anthocyanidin-binding site is contributed by histidine 150. UDP-alpha-D-glucose is bound by residues alanine 333, glutamine 335, histidine 350, tryptophan 353, asparagine 354, serine 355, and glutamate 358. Glycine 373 is a binding site for an anthocyanidin. UDP-alpha-D-glucose-binding residues include aspartate 374 and glutamine 375.

This sequence belongs to the UDP-glycosyltransferase family. Expressed in ovaries.

It carries out the reaction a flavonol + UDP-alpha-D-glucose = a flavonol 3-O-beta-D-glucoside + UDP + H(+). It functions in the pathway flavonoid metabolism. Catalyzes the glucosylation of quercetin. Preferentially uses UDP-glucose as sugar donor, but is also able to use UDP-gal and UDP-xyl. Is probably not required for the accumulation of anthocyanin in red-fleshed kiwifruit varieties. The polypeptide is Flavonol 3-O-glucosyltransferase F3GT2 (Actinidia chinensis var. chinensis (Chinese soft-hair kiwi)).